Reading from the N-terminus, the 311-residue chain is Coelenterazine h 2-monooxygenase (311 aa).

An AB hydrolase-1 domain is found at 45–291 (NAVIFLHGNA…KGLHFSQEDA (247 aa)). The substrate site is built by D162 and H285.

As to quaternary structure, monomer.

It catalyses the reaction coelenterazine h + O2 = excited coelenteramide h monoanion + hnu + CO2 + H(+). In terms of biological role, upon binding the substrate, the enzyme catalyzes an oxygenation, producing a very short-lived hydroperoxide that cyclizes into a dioxetanone structure, which collapses, releasing a CO(2) molecule. The spontaneous breakdown of the dioxetanone releases the energy (about 50 kcal/mole) that is necessary to generate the excited state of the coelenteramide product, which is the singlet form of the monoanion. In vivo the product undergoes the process of nonradiative energy transfer to an accessory protein, a green fluorescent protein (GFP), which results in green bioluminescence. In vitro, in the absence of GFP, the product emits blue light. In Renilla reniformis (Sea pansy), this protein is Coelenterazine h 2-monooxygenase.